The chain runs to 244 residues: Tyrosine recombinase XerD-like (244 aa).

The Core-binding (CB) domain occupies 1–73 (MRDRISAFLE…ACNQFLYFLY (73 aa)). Residues 90–244 (AEKKTEKPEI…KTVLTLEKYR (155 aa)) form the Tyr recombinase domain. Residues K150 and R211 contribute to the active site. Y243 serves as the catalytic O-(3'-phospho-DNA)-tyrosine intermediate.

Belongs to the 'phage' integrase family. XerD-like subfamily.

It is found in the cytoplasm. In terms of biological role, putative tyrosine recombinase. Not involved in the cutting and rejoining of the recombining DNA molecules on dif(SL) site. In Streptococcus pneumoniae (strain Hungary19A-6), this protein is Tyrosine recombinase XerD-like.